Consider the following 342-residue polypeptide: Polyprenyl transferase trt2 (342 aa).

9 helical membrane passes run 71-91 (VVGVAYTAAIAPVSLPATVLL), 95-115 (IILSLWGFLIRSGGCAWNDLI), 141-161 (AALLTAIIFGCGGLLLLLLPS), 163-183 (CTVEAGIILFFALLYPFGKRF), 187-207 (PQLILVNIAWAIPMAMSSLEV), 216-236 (TLSMCIFIASVIVMIDVVYAC), 261-278 (LAYGFFFSGAISLLLGGV), 282-304 (LGLPFIVFSVGGHIFGFLRFLSV), and 319-339 (AKSSCLLATVFWVLGFFLEYL).

This sequence belongs to the UbiA prenyltransferase family. It depends on Mg(2+) as a cofactor.

It localises to the membrane. The catalysed reaction is 3,5-dimethylorsellinate + (2E,6E)-farnesyl diphosphate = (3R)-3-farnesyl-6-hydroxy-2,3,5-trimethyl-4-oxocyclohexa-1,5-diene-1-carboxylate + diphosphate + H(+). It participates in secondary metabolite biosynthesis; terpenoid biosynthesis. In terms of biological role, polyprenyl transferase; part of the gene cluster that mediates the biosynthesis of terretonin, a fungal meroterpenoid that acts as a mycotoxin. The first step of the pathway is the synthesis of 3,5-dimethylorsellinic acid (DMOA) by the polyketide synthase trt4. DMOA is then prenylated into farnesyl-DMOA by the polyprenyl transferase trt2. Methylation by the methyltransferase trt5 then leads to farnesyl-DMOA methyl ester which is further subject to epoxidation by the FAD-dependent monooxygenase trt8 to yield epoxyfarnesyl-DMOA methyl ester. Cyclization of epoxyfarnesyl-DMOA methyl ester by the terpene cyclase trt1 leads to a tetracycle intermediate which is in turn converted to preterretonin. Dehydrogenase trt9 comes next to transform preterretonin to preterrenoid. The FAD-dependent monooxygenase trt3 is then required for the C-hydroxylation at C16 of preterrenoid to yield terrenoid. The cytochrome P450 trt6 catalyzes three successive oxidations to transform terrenoid into an unstable intermediate, which then undergoes the D-ring expansion and unusual rearrangement of the methoxy group to afford the core skeleton of terretonin. Trt14 catalyzes the D-ring expansion of terretonin involving intramolecular methoxy rearrangement as well as the hydrolysis of the expanded D-ring and the methyl ester moiety. Finally, the nonheme iron-dependent dioxygenase trt7 accomplishes the last two oxidation reactions steps to complete the biosynthesis of terretonin. Terretonin C is produced via spontaneous decarboxylation of the terretonin precursor. Another shunt product of the terretonin biosynthesis is dihydrofarnesyl-DMOA, derived from epoxyfarnesyl-DMOA through hydrolysis of the epoxide. The chain is Polyprenyl transferase trt2 from Aspergillus terreus (strain NIH 2624 / FGSC A1156).